The following is an 895-amino-acid chain: Splicing factor 3B subunit 2 (895 aa).

Positions 1–10 (MATEHPEPPK) are enriched in basic and acidic residues. 4 disordered regions span residues 1 to 24 (MATEHPEPPKAELQLPPPPPPGHY), 65 to 136 (LNRP…LRVG), 197 to 373 (AKMG…EYVT), and 400 to 453 (KKEK…SKKK). Residue K10 forms a Glycyl lysine isopeptide (Lys-Gly) (interchain with G-Cter in SUMO2) linkage. The SAP domain maps to 24 to 58 (YGAWAAQELQAKLAEIGAPIQGNREELVERLQSYT). 2 stretches are compositionally biased toward pro residues: residues 90-114 (IPMPPPPLGLPPLQPPPPPPPPPPG) and 122-133 (AHPPNLGPPPPL). Residues 140-199 (ALSEEERLKLAQQQAALLMQQEERAKQQGDHSLKEHELLEQQKRAAVLLEQERQQEIAKM) adopt a coiled-coil conformation. Over residues 218-238 (PLGPRVAAPVGPVGPTPTVLP) the composition is skewed to low complexity. Omega-N-methylarginine occurs at positions 222, 245, and 247. Positions 241-254 (APVPRPRGPPPPPG) are enriched in pro residues. At K275 the chain carries N6-acetyllysine. Residues 277-286 (LQLKESRQEE) show a composition bias toward basic and acidic residues. K280 is covalently cross-linked (Glycyl lysine isopeptide (Lys-Gly) (interchain with G-Cter in SUMO2)). The residue at position 289 (S289) is a Phosphoserine. The residue at position 298 (T298) is a Phosphothreonine. Residues S307 and S309 each carry the phosphoserine modification. T311 bears the Phosphothreonine mark. Position 317 is a phosphoserine (S317). Residues 322–338 (EKNRKRRNRKKKKKPQR) are compositionally biased toward basic residues. Over residues 347-359 (SGDREKDSTRSRG) the composition is skewed to basic and acidic residues. 2 positions are modified to phosphoserine: S360 and S362. Residues K400 and K412 each participate in a glycyl lysine isopeptide (Lys-Gly) (interchain with G-Cter in SUMO2) cross-link. 2 stretches are compositionally biased toward basic and acidic residues: residues 400-414 (KKEKEKEPEKLDKLE) and 422-431 (KGFEEEHKDS). The tract at residues 401–550 (KEKEKEPEKL…QEKEEQKTMK (150 aa)) is required for interaction with PRMT9. S431, S435, and S436 each carry phosphoserine. K492 is covalently cross-linked (Glycyl lysine isopeptide (Lys-Gly) (interchain with G-Cter in SUMO2)). Residue R508 is modified to Omega-N-methylarginine; by PRMT9; alternate. R508 is modified (symmetric dimethylarginine; by PRMT9; alternate). The residue at position 515 (R515) is an Omega-N-methylarginine. A Glycyl lysine isopeptide (Lys-Gly) (interchain with G-Cter in SUMO2) cross-link involves residue K543. Residues 691–757 (AAEFQTKTEE…PGGFSSVPAG (67 aa)) are disordered. A compositionally biased stretch (acidic residues) spans 712 to 732 (EPSDEESSEEEEEEESDEDKP). Residue K770 forms a Glycyl lysine isopeptide (Lys-Gly) (interchain with G-Cter in SUMO2) linkage. Phosphothreonine is present on T780. Residues K790, K843, and K857 each participate in a glycyl lysine isopeptide (Lys-Gly) (interchain with G-Cter in SUMO2) cross-link. Positions 844 to 869 (YEEHVREQQAQVEKEDFSDMVAEHAA) are enriched in basic and acidic residues. The interval 844–895 (YEEHVREQQAQVEKEDFSDMVAEHAAKQKQKKRKAQPQDSRGGSKKYKEFKF) is disordered. Residue S861 is modified to Phosphoserine.

In terms of assembly, component of the 17S U2 SnRNP complex, a ribonucleoprotein complex that contains small nuclear RNA (snRNA) U2 and a number of specific proteins. Part of the SF3B subcomplex of the 17S U2 SnRNP complex. SF3B associates with the splicing subcomplex SF3A and a 12S RNA unit to form the U2 small nuclear ribonucleoproteins complex (U2 snRNP). Within the SF3B complex, interacts directly with SF3B4. Found in a complex with PRMT9, SF3B2 and SF3B4. Interacts (Arg-508-methylated form) with SMN1 (via Tudor domain). Interacts with RBM7. Interacts with ERCC6. Component of the minor spliceosome. Within this complex, interacts with SCNM1 and CRIPT. (Microbial infection) Interacts with HIV-1 Vpr. In terms of processing, methylation at Arg-508 by PRMT9 is required for the interaction with SMN1.

The protein localises to the nucleus. The protein resides in the nucleus speckle. Functionally, component of the 17S U2 SnRNP complex of the spliceosome, a large ribonucleoprotein complex that removes introns from transcribed pre-mRNAs. The 17S U2 SnRNP complex (1) directly participates in early spliceosome assembly and (2) mediates recognition of the intron branch site during pre-mRNA splicing by promoting the selection of the pre-mRNA branch-site adenosine, the nucleophile for the first step of splicing. Within the 17S U2 SnRNP complex, SF3B2 is part of the SF3B subcomplex, which is required for 'A' complex assembly formed by the stable binding of U2 snRNP to the branchpoint sequence in pre-mRNA. Sequence independent binding of SF3A and SF3B subcomplexes upstream of the branch site is essential, it may anchor U2 snRNP to the pre-mRNA. May also be involved in the assembly of the 'E' complex. Also acts as a component of the minor spliceosome, which is involved in the splicing of U12-type introns in pre-mRNAs. The polypeptide is Splicing factor 3B subunit 2 (SF3B2) (Homo sapiens (Human)).